A 459-amino-acid chain; its full sequence is Putrescine aminotransferase (459 aa).

Pyridoxal 5'-phosphate-binding positions include Gly-150–Thr-151 and Gln-274. Lys-300 carries the N6-(pyridoxal phosphate)lysine modification. Thr-332 serves as a coordination point for pyridoxal 5'-phosphate.

This sequence belongs to the class-III pyridoxal-phosphate-dependent aminotransferase family. Putrescine aminotransferase subfamily. The cofactor is pyridoxal 5'-phosphate.

It carries out the reaction an alkane-alpha,omega-diamine + 2-oxoglutarate = an omega-aminoaldehyde + L-glutamate. The enzyme catalyses putrescine + 2-oxoglutarate = 1-pyrroline + L-glutamate + H2O. It catalyses the reaction cadaverine + 2-oxoglutarate = 5-aminopentanal + L-glutamate. Its pathway is amine and polyamine degradation; putrescine degradation; 4-aminobutanal from putrescine (transaminase route): step 1/1. In terms of biological role, catalyzes the aminotransferase reaction from putrescine to 2-oxoglutarate, leading to glutamate and 4-aminobutanal, which spontaneously cyclizes to form 1-pyrroline. This is the first step in one of two pathways for putrescine degradation, where putrescine is converted into 4-aminobutanoate (gamma-aminobutyrate or GABA) via 4-aminobutanal. Also functions as a cadaverine transaminase in a a L-lysine degradation pathway to succinate that proceeds via cadaverine, glutarate and L-2-hydroxyglutarate. The chain is Putrescine aminotransferase from Escherichia coli (strain ATCC 8739 / DSM 1576 / NBRC 3972 / NCIMB 8545 / WDCM 00012 / Crooks).